Reading from the N-terminus, the 715-residue chain is Glycine--tRNA ligase beta subunit (715 aa).

This sequence belongs to the class-II aminoacyl-tRNA synthetase family. Tetramer of two alpha and two beta subunits.

It localises to the cytoplasm. It carries out the reaction tRNA(Gly) + glycine + ATP = glycyl-tRNA(Gly) + AMP + diphosphate. This Nitrosomonas eutropha (strain DSM 101675 / C91 / Nm57) protein is Glycine--tRNA ligase beta subunit.